Here is a 653-residue protein sequence, read N- to C-terminus: Threonine--tRNA ligase (653 aa).

The TGS domain maps to 1–61; the sequence is MIKITFPDGN…NEDAEVKLFK (61 aa). The catalytic stretch occupies residues 243-542; it reads DHRKIGKELE…LIEHTAGKFP (300 aa). Residues C338, H389, and H519 each contribute to the Zn(2+) site.

It belongs to the class-II aminoacyl-tRNA synthetase family. As to quaternary structure, homodimer. The cofactor is Zn(2+).

It localises to the cytoplasm. The enzyme catalyses tRNA(Thr) + L-threonine + ATP = L-threonyl-tRNA(Thr) + AMP + diphosphate + H(+). In terms of biological role, catalyzes the attachment of threonine to tRNA(Thr) in a two-step reaction: L-threonine is first activated by ATP to form Thr-AMP and then transferred to the acceptor end of tRNA(Thr). Also edits incorrectly charged L-seryl-tRNA(Thr). This chain is Threonine--tRNA ligase, found in Porphyromonas gingivalis (strain ATCC BAA-308 / W83).